The sequence spans 265 residues: 3-methyl-2-oxobutanoate hydroxymethyltransferase (265 aa).

Residues Asp45 and Asp84 each coordinate Mg(2+). Residues 45–46, Asp84, and Lys112 contribute to the 3-methyl-2-oxobutanoate site; that span reads DS. Glu114 contacts Mg(2+). The active-site Proton acceptor is the Glu182.

This sequence belongs to the PanB family. In terms of assembly, homodecamer; pentamer of dimers. Mg(2+) serves as cofactor.

It localises to the cytoplasm. The catalysed reaction is 3-methyl-2-oxobutanoate + (6R)-5,10-methylene-5,6,7,8-tetrahydrofolate + H2O = 2-dehydropantoate + (6S)-5,6,7,8-tetrahydrofolate. Its pathway is cofactor biosynthesis; (R)-pantothenate biosynthesis; (R)-pantoate from 3-methyl-2-oxobutanoate: step 1/2. Catalyzes the reversible reaction in which hydroxymethyl group from 5,10-methylenetetrahydrofolate is transferred onto alpha-ketoisovalerate to form ketopantoate. The polypeptide is 3-methyl-2-oxobutanoate hydroxymethyltransferase (Baumannia cicadellinicola subsp. Homalodisca coagulata).